A 601-amino-acid polypeptide reads, in one-letter code: Glutamyl-tRNA(Gln) amidotransferase subunit B, mitochondrial (601 aa).

A mitochondrion-targeting transit peptide spans 1 to 55; it reads MLRPWLRQCPRATRSLACPQCHLPRPQTARRALRPLPALSLSHPIRSLQTTTTES.

Belongs to the GatB/GatE family. GatB subfamily. In terms of assembly, subunit of the heterotrimeric GatCAB amidotransferase (AdT) complex, composed of A, B and C subunits.

Its subcellular location is the mitochondrion. The enzyme catalyses L-glutamyl-tRNA(Gln) + L-glutamine + ATP + H2O = L-glutaminyl-tRNA(Gln) + L-glutamate + ADP + phosphate + H(+). Allows the formation of correctly charged Gln-tRNA(Gln) through the transamidation of misacylated Glu-tRNA(Gln) in the mitochondria. The reaction takes place in the presence of glutamine and ATP through an activated gamma-phospho-Glu-tRNA(Gln). The protein is Glutamyl-tRNA(Gln) amidotransferase subunit B, mitochondrial of Aspergillus niger (strain ATCC MYA-4892 / CBS 513.88 / FGSC A1513).